We begin with the raw amino-acid sequence, 315 residues long: Salivary protein SG34 (315 aa).

Positions 1–20 are cleaved as a signal peptide; the sequence is MPVSYDFVILLALFIVLARS. A coiled-coil region spans residues 98 to 161; the sequence is NAEVELLRES…QEEIEQQTKQ (64 aa).

Its function is as follows. (Microbial infection) Modulates replication of duck Tembusu virus in salivary glands and virus release into the saliva, probably via the regulation of antimicrobial peptides expression in response to duck Tembusu virus infection. This Aedes albopictus (Asian tiger mosquito) protein is Salivary protein SG34.